A 201-amino-acid polypeptide reads, in one-letter code: Large ribosomal subunit protein uL18 (201 aa).

It belongs to the universal ribosomal protein uL18 family. In terms of assembly, part of the 50S ribosomal subunit. Contacts the 5S and 23S rRNAs.

Its function is as follows. This is one of the proteins that bind and probably mediate the attachment of the 5S RNA into the large ribosomal subunit, where it forms part of the central protuberance. This chain is Large ribosomal subunit protein uL18, found in Thermococcus onnurineus (strain NA1).